The following is a 900-amino-acid chain: Bifunctional uridylyltransferase/uridylyl-removing enzyme (900 aa).

Positions 1–342 (MPQVDPELFD…WEGESGPIVP (342 aa)) are uridylyltransferase. The interval 343–705 (LNSRFQVRDG…TTQREFEGGT (363 aa)) is uridylyl-removing. In terms of domain architecture, HD spans 461–583 (VDAHTLNVIK…VGDETHLDYL (123 aa)). 2 consecutive ACT domains span residues 706 to 789 (QIFI…IIQR) and 816 to 896 (ILEI…PSPS).

It belongs to the GlnD family. Requires Mg(2+) as cofactor.

It carries out the reaction [protein-PII]-L-tyrosine + UTP = [protein-PII]-uridylyl-L-tyrosine + diphosphate. It catalyses the reaction [protein-PII]-uridylyl-L-tyrosine + H2O = [protein-PII]-L-tyrosine + UMP + H(+). With respect to regulation, uridylyltransferase (UTase) activity is inhibited by glutamine, while glutamine activates uridylyl-removing (UR) activity. In terms of biological role, modifies, by uridylylation and deuridylylation, the PII regulatory proteins (GlnB and homologs), in response to the nitrogen status of the cell that GlnD senses through the glutamine level. Under low glutamine levels, catalyzes the conversion of the PII proteins and UTP to PII-UMP and PPi, while under higher glutamine levels, GlnD hydrolyzes PII-UMP to PII and UMP (deuridylylation). Thus, controls uridylylation state and activity of the PII proteins, and plays an important role in the regulation of nitrogen fixation and metabolism. The sequence is that of Bifunctional uridylyltransferase/uridylyl-removing enzyme from Stutzerimonas stutzeri (strain A1501) (Pseudomonas stutzeri).